Consider the following 138-residue polypeptide: Prefoldin subunit alpha (138 aa).

Belongs to the prefoldin subunit alpha family. In terms of assembly, heterohexamer of two alpha and four beta subunits.

The protein resides in the cytoplasm. Molecular chaperone capable of stabilizing a range of proteins. Seems to fulfill an ATP-independent, HSP70-like function in archaeal de novo protein folding. The protein is Prefoldin subunit alpha of Methanococcoides burtonii (strain DSM 6242 / NBRC 107633 / OCM 468 / ACE-M).